A 104-amino-acid chain; its full sequence is Pyrimidine/purine nucleoside phosphorylase (104 aa).

Belongs to the nucleoside phosphorylase PpnP family.

It catalyses the reaction a purine D-ribonucleoside + phosphate = a purine nucleobase + alpha-D-ribose 1-phosphate. The catalysed reaction is adenosine + phosphate = alpha-D-ribose 1-phosphate + adenine. The enzyme catalyses cytidine + phosphate = cytosine + alpha-D-ribose 1-phosphate. It carries out the reaction guanosine + phosphate = alpha-D-ribose 1-phosphate + guanine. It catalyses the reaction inosine + phosphate = alpha-D-ribose 1-phosphate + hypoxanthine. The catalysed reaction is thymidine + phosphate = 2-deoxy-alpha-D-ribose 1-phosphate + thymine. The enzyme catalyses uridine + phosphate = alpha-D-ribose 1-phosphate + uracil. It carries out the reaction xanthosine + phosphate = alpha-D-ribose 1-phosphate + xanthine. In terms of biological role, catalyzes the phosphorolysis of diverse nucleosides, yielding D-ribose 1-phosphate and the respective free bases. Can use uridine, adenosine, guanosine, cytidine, thymidine, inosine and xanthosine as substrates. Also catalyzes the reverse reactions. This chain is Pyrimidine/purine nucleoside phosphorylase, found in Trichlorobacter lovleyi (strain ATCC BAA-1151 / DSM 17278 / SZ) (Geobacter lovleyi).